We begin with the raw amino-acid sequence, 392 residues long: Phosphoglycerate kinase (392 aa).

Substrate contacts are provided by residues 21-23 (DFN), Arg36, 59-62 (HLGR), Arg113, and Arg146. ATP contacts are provided by residues Lys197, Glu319, and 345–348 (GGDT).

This sequence belongs to the phosphoglycerate kinase family. As to quaternary structure, monomer.

Its subcellular location is the cytoplasm. It catalyses the reaction (2R)-3-phosphoglycerate + ATP = (2R)-3-phospho-glyceroyl phosphate + ADP. The protein operates within carbohydrate degradation; glycolysis; pyruvate from D-glyceraldehyde 3-phosphate: step 2/5. The chain is Phosphoglycerate kinase from Francisella tularensis subsp. holarctica (strain FTNF002-00 / FTA).